Here is a 361-residue protein sequence, read N- to C-terminus: Eukaryotic translation initiation factor 3 subunit F (361 aa).

Low complexity-rich tracts occupy residues 1–11 (MATPVVSASGP) and 21–42 (AAPA…AAAV). Positions 1-42 (MATPVVSASGPPATPAPAPVAAPASASASVPAPTPAPAAAAV) are disordered. An N-acetylalanine modification is found at A2. At S50 the chain carries Phosphoserine; by CDK11; in vitro. Low complexity predominate over residues 55 to 78 (AAAATTAAPGQTPASAQAPAQTPA). The disordered stretch occupies residues 55–86 (AAAATTAAPGQTPASAQAPAQTPAPALPGPAL). The 131-residue stretch at 96-226 (VRLHPVILAS…IKAYVSTLMG (131 aa)) folds into the MPN domain. K242 carries the N6-acetyllysine modification. Phosphoserine is present on S262.

Belongs to the eIF-3 subunit F family. In terms of assembly, component of the eukaryotic translation initiation factor 3 (eIF-3) complex, which is composed of 13 subunits: EIF3A, EIF3B, EIF3C, EIF3D, EIF3E, EIF3F, EIF3G, EIF3H, EIF3I, EIF3J, EIF3K, EIF3L and EIF3M. The eIF-3 complex appears to include 3 stable modules: module A is composed of EIF3A, EIF3B, EIF3G and EIF3I; module B is composed of EIF3F, EIF3H, and EIF3M; and module C is composed of EIF3C, EIF3D, EIF3E, EIF3K and EIF3L. EIF3C of module C binds EIF3B of module A and EIF3H of module B, thereby linking the three modules. EIF3J is a labile subunit that binds to the eIF-3 complex via EIF3B. The eIF-3 complex interacts with RPS6KB1 under conditions of nutrient depletion. Mitogenic stimulation leads to binding and activation of a complex composed of MTOR and RPTOR, leading to phosphorylation and release of RPS6KB1 and binding of EIF4B to eIF-3. Interacts with RNF139; the interaction leads to protein translation inhibitions in a ubiquitination-dependent manner. Interacts with DTX1, the interaction is required for deubiquitinating activity towards NOTCH1. Post-translationally, phosphorylation is enhanced upon serum stimulation. Phosphorylated during apoptosis by caspase-processed CDK11.

It localises to the cytoplasm. The enzyme catalyses Thiol-dependent hydrolysis of ester, thioester, amide, peptide and isopeptide bonds formed by the C-terminal Gly of ubiquitin (a 76-residue protein attached to proteins as an intracellular targeting signal).. Its function is as follows. Component of the eukaryotic translation initiation factor 3 (eIF-3) complex, which is required for several steps in the initiation of protein synthesis. The eIF-3 complex associates with the 40S ribosome and facilitates the recruitment of eIF-1, eIF-1A, eIF-2:GTP:methionyl-tRNAi and eIF-5 to form the 43S pre-initiation complex (43S PIC). The eIF-3 complex stimulates mRNA recruitment to the 43S PIC and scanning of the mRNA for AUG recognition. The eIF-3 complex is also required for disassembly and recycling of post-termination ribosomal complexes and subsequently prevents premature joining of the 40S and 60S ribosomal subunits prior to initiation. The eIF-3 complex specifically targets and initiates translation of a subset of mRNAs involved in cell proliferation, including cell cycling, differentiation and apoptosis, and uses different modes of RNA stem-loop binding to exert either translational activation or repression. In terms of biological role, deubiquitinates activated NOTCH1, promoting its nuclear import, thereby acting as a positive regulator of Notch signaling. The chain is Eukaryotic translation initiation factor 3 subunit F from Macaca fascicularis (Crab-eating macaque).